The following is a 624-amino-acid chain: Probable potassium transport system protein Kup 1 (624 aa).

12 helical membrane-spanning segments follow: residues 10-30, 48-68, 94-114, 133-153, 159-179, 210-230, 242-262, 270-290, 331-351, 363-383, 388-408, and 413-433; these read LALGALGIVFGDIGTSPLYAL, LSLIFWSLIIVVSFKYLMIIF, PVFYIVAIFGAGLLLGDGMLT, LYPYVLPIASLILVLLFSLQA, IGYLFGPLILIWFITIAILGI, FLLGGIFLVVTGGEALFADIG, FFIALPCLLLNYFGQGANLIV, PFFMIAPPWFYLPLIIIATVA, IYVPQINFILFIGTMAFCLAF, IAVNLEMLLVDAMVAYAAVSI, TFNVIFLFGLFLLIDLAFLGA, and FITGGWVPIVLAFFIAFIMYS.

This sequence belongs to the HAK/KUP transporter (TC 2.A.72) family.

The protein localises to the cell inner membrane. It catalyses the reaction K(+)(in) + H(+)(in) = K(+)(out) + H(+)(out). Transport of potassium into the cell. Likely operates as a K(+):H(+) symporter. The polypeptide is Probable potassium transport system protein Kup 1 (Legionella pneumophila (strain Paris)).